The primary structure comprises 197 residues: Thymidylate kinase (197 aa).

Position 7-14 (7-14 (GIDGSGKS)) interacts with ATP.

Belongs to the thymidylate kinase family.

The enzyme catalyses dTMP + ATP = dTDP + ADP. Phosphorylation of dTMP to form dTDP in both de novo and salvage pathways of dTTP synthesis. The polypeptide is Thymidylate kinase (tmk) (Thermotoga maritima (strain ATCC 43589 / DSM 3109 / JCM 10099 / NBRC 100826 / MSB8)).